The sequence spans 467 residues: MQESLKKMWSGRFSGESSELLEEFNASIGFDKNLYREDIAGSKAHAKMLGACGILKPEEAAAIVAGLDAVLAQIEEGKFEFKTADEDIHMAVEKRLSELIGSELGGRLHTARSRNDQVALDFRLYVLRQNEQIARQIREFIATLTSLASAHLDTLMPGYTHLQHAQPVSLAYHLLAYAFMFKRDFERFISSHERNNLCPLGSAALAGTPHPIRRELVAQELNFAGITQNAMDSVSDRDFALEILFNISVLMTHASRLCEELILWSSQEFGFVTISDAYSTGSSIMPQKKNPDVAELIRGKTGRANGNLIALLTTMKGLPLAYNKDMQEDKEGVFDSVRTATSSLAILNAMMKEAKFNEQNMLAATKKGHLSATDLADYLVREKNVPFRTAHFITGKAVAHAENLGVDLSELDAAQLKSVDENLDENAVKFLNLHASKEARTSAGGTANASVRKQIEELESWLSKSGD.

Belongs to the lyase 1 family. Argininosuccinate lyase subfamily.

Its subcellular location is the cytoplasm. The enzyme catalyses 2-(N(omega)-L-arginino)succinate = fumarate + L-arginine. Its pathway is amino-acid biosynthesis; L-arginine biosynthesis; L-arginine from L-ornithine and carbamoyl phosphate: step 3/3. This Campylobacter curvus (strain 525.92) protein is Argininosuccinate lyase.